Here is a 793-residue protein sequence, read N- to C-terminus: E3 ubiquitin-protein ligase UHRF1 (793 aa).

Positions Met-1–Val-78 constitute a Ubiquitin-like domain. Residues Ser-76, Ser-91, Ser-95, and Ser-165 each carry the phosphoserine modification. Residues Ser-82–Glu-124 form a disordered region. 2 tudor-like regions span residues Gly-133–Arg-209 and Asp-216–Pro-283. Residue Lys-279 forms a Glycyl lysine isopeptide (Lys-Gly) (interchain with G-Cter in SUMO2) linkage. Ser-287 is modified (phosphoserine). The segment at Arg-296 to Ser-301 is linker. The residue at position 298 (Ser-298) is a Phosphoserine; by PKA. Residues Asn-310–Asp-366 form a PHD-type zinc finger. Histone H3R2me0 binding regions lie at residues Cys-333 to Asp-337 and Pro-353 to Glu-355. Ser-368 carries the post-translational modification Phosphoserine. A Glycyl lysine isopeptide (Lys-Gly) (interchain with G-Cter in SUMO2) cross-link involves residue Lys-385. The residue at position 399 (Lys-399) is an N6-acetyllysine. The YDG domain occupies Gly-419–Arg-582. The required to promote base flipping stretch occupies residues His-445–Val-446. Residues Ala-463–Gly-464 and Asp-469 contribute to the DNA site. Required for formation of a 5-methylcytosine-binding pocket regions lie at residues Tyr-466–Asp-469 and Tyr-478–Ser-481. Lys-546 is subject to N6-acetyllysine; alternate. Residue Lys-546 forms a Glycyl lysine isopeptide (Lys-Gly) (interchain with G-Cter in SUMO2); alternate linkage. Residues Arg-618–Glu-629 show a composition bias toward basic and acidic residues. The tract at residues Arg-618–Pro-673 is disordered. Ser-639 carries the phosphoserine; by CDK1 modification. Residue Ser-651 is modified to Phosphoserine. Residue Lys-670 forms a Glycyl lysine isopeptide (Lys-Gly) (interchain with G-Cter in SUMO2) linkage. Phosphoserine occurs at positions 707 and 709. An RING-type zinc finger spans residues Cys-724 to Arg-763.

As to quaternary structure, interacts with DNMT3A and DNMT3B. Interacts with DNMT1; the interaction is direct. Interacts with USP7; leading to its deubiquitination. Interacts with histone H3. Interacts with HDAC1, but not with HDAC2. Interacts with BLTP3A. Interacts with PML. Interacts with EHMT2. Binds hemimethylated CpG containing oligonucleotides. Interacts with ZNF263; recruited to the SIX3 promoter along with other proteins involved in chromatin modification and transcriptional corepression where it contributes to transcriptional repression. Interacts with UHRF2. Interacts with FANCD2. Interacts with TET1 isoform 2; this interaction induces the recruitment of TET1 isoform 2 to replicating heterochromatin. In terms of processing, phosphorylation at Ser-298 of the linker region decreases the binding to H3K9me3. Phosphorylation at Ser-639 by CDK1 during M phase impairs interaction with USP7, preventing deubiquitination and leading to degradation by the proteasome. Ubiquitinated; which leads to proteasomal degradation. Autoubiquitinated; interaction with USP7 leads to deubiquitination and prevents degradation. Ubiquitination and degradation takes place during M phase, when phosphorylation at Ser-639 prevents interaction with USP7 and subsequent deubiquitination. Polyubiquitination may be stimulated by DNA damage. Expressed in thymus, bone marrow, testis, lung and heart. Overexpressed in breast cancer.

It is found in the nucleus. It carries out the reaction S-ubiquitinyl-[E2 ubiquitin-conjugating enzyme]-L-cysteine + [acceptor protein]-L-lysine = [E2 ubiquitin-conjugating enzyme]-L-cysteine + N(6)-ubiquitinyl-[acceptor protein]-L-lysine.. The protein operates within protein modification; protein ubiquitination. In terms of biological role, multidomain protein that acts as a key epigenetic regulator by bridging DNA methylation and chromatin modification. Specifically recognizes and binds hemimethylated DNA at replication forks via its YDG domain and recruits DNMT1 methyltransferase to ensure faithful propagation of the DNA methylation patterns through DNA replication. In addition to its role in maintenance of DNA methylation, also plays a key role in chromatin modification: through its tudor-like regions and PHD-type zinc fingers, specifically recognizes and binds histone H3 trimethylated at 'Lys-9' (H3K9me3) and unmethylated at 'Arg-2' (H3R2me0), respectively, and recruits chromatin proteins. Enriched in pericentric heterochromatin where it recruits different chromatin modifiers required for this chromatin replication. Also localizes to euchromatic regions where it negatively regulates transcription possibly by impacting DNA methylation and histone modifications. Has E3 ubiquitin-protein ligase activity by mediating the ubiquitination of target proteins such as histone H3 and PML. It is still unclear how E3 ubiquitin-protein ligase activity is related to its role in chromatin in vivo. Plays a role in DNA repair by cooperating with UHRF2 to ensure recruitment of FANCD2 to interstrand cross-links (ICLs) leading to FANCD2 activation. Acts as a critical player of proper spindle architecture by catalyzing the 'Lys-63'-linked ubiquitination of KIF11, thereby controlling KIF11 localization on the spindle. This is E3 ubiquitin-protein ligase UHRF1 (UHRF1) from Homo sapiens (Human).